A 790-amino-acid chain; its full sequence is MNQPRPRYVVDRAAYSLSLFDDEFEKKDRAYPVGEKLRNTFRCSSAKFKAFVFGLLPVLSWLPKYKIKDYIIPDLLGGLSGGCIQVPQGMAFALLANLPAVNGLYSSFFPLLTYFFLGGIHQMVPGTFAVISILVGNICLQLAPESKFQIFNNVTNETYVDTAAMEAERLHVSATLACLTAVIQMALGFMQFGFVAIYLSESFIRGFMTAAGLQILISVLKYIFGLTIPSYTGPGSIVFTFIDICKNLPHTNIASLIFALVSGVFLVLVKELNARYMHKIHFPIPTEMIVVVVATAISGSCKMPKKYHMQIVGEIRQGFPTPVAPMVSQWKGMVGTAFSLAIVGYVINLAMGRTLASKHGYDVDSNQEMIALGCSNFFGSFFKIHVICCALSVTLAVDGAGGKSQVASLCVSLVVMITMLVLGSYLYPLPKAVLGALIAVNLKNSLKQLTDPYYLWRKSKLDCCVWVVSFLSSFFLSLPYGVAVGVAFSILVVIFQTQFRNGSTLAQVMDTDIYVNPKTYNRAQEIAGVKIVTYCSPLYLANSEIFRQKVIAKTGMDPQKVLLAKQKYLRKQEKRTAIPTQQRKSLFMKTKTVSLQELQQDFESAPSTDPNNNQAPAAEAHISYITFSPDASTAAACELPASTRSPQEASDTLASVPPFVTFHTLILDMSGVSFVDLMGIKALAKLSSTYEKIGVQIFLVNIHAQVYNDISHGGVFEDGCVQRSHVFPSIHDAVLFAQANAREAPDRNFHGAPGDTEFSLYDSEEEGPSYWDLEQEMFGTMFHTETLTAL.

At 1 to 70 (MNQPRPRYVV…WLPKYKIKDY (70 aa)) the chain is on the cytoplasmic side. Residues 71–96 (IIPDLLGGLSGGCIQVPQGMAFALLA) traverse the membrane as a helical segment. The Extracellular portion of the chain corresponds to 97 to 100 (NLPA). The chain crosses the membrane as a helical span at residues 101–109 (VNGLYSSFF). Over 110–129 (PLLTYFFLGGIHQMVPGTFA) the chain is Cytoplasmic. A helical membrane pass occupies residues 130 to 142 (VISILVGNICLQL). The Extracellular portion of the chain corresponds to 143 to 162 (APESKFQIFNNVTNETYVDT). A helical membrane pass occupies residues 163 to 191 (AAMEAERLHVSATLACLTAVIQMALGFMQ). The Cytoplasmic segment spans residues 192-201 (FGFVAIYLSE). The helical transmembrane segment at 202-224 (SFIRGFMTAAGLQILISVLKYIF) threads the bilayer. The Extracellular portion of the chain corresponds to 225–237 (GLTIPSYTGPGSI). Residues 238–246 (VFTFIDICK) constitute an intramembrane region (helical). Residues 247–254 (NLPHTNIA) are Extracellular-facing. The chain crosses the membrane as a helical span at residues 255–275 (SLIFALVSGVFLVLVKELNAR). At 276–286 (YMHKIHFPIPT) the chain is on the cytoplasmic side. The chain crosses the membrane as a helical span at residues 287–299 (EMIVVVVATAISG). At 300–334 (SCKMPKKYHMQIVGEIRQGFPTPVAPMVSQWKGMV) the chain is on the extracellular side. A helical membrane pass occupies residues 335–358 (GTAFSLAIVGYVINLAMGRTLASK). The Cytoplasmic portion of the chain corresponds to 359–365 (HGYDVDS). A helical membrane pass occupies residues 366–379 (NQEMIALGCSNFFG). At 380 to 390 (SFFKIHVICCA) the chain is on the extracellular side. A helical transmembrane segment spans residues 391–400 (LSVTLAVDGA). At 401–405 (GGKSQ) the chain is on the cytoplasmic side. The helical transmembrane segment at 406 to 419 (VASLCVSLVVMITM) threads the bilayer. Residues 420 to 431 (LVLGSYLYPLPK) are Extracellular-facing. The chain crosses the membrane as a helical span at residues 432–457 (AVLGALIAVNLKNSLKQLTDPYYLWR). Over 458 to 461 (KSKL) the chain is Cytoplasmic. The chain crosses the membrane as a helical span at residues 462–476 (DCCVWVVSFLSSFFL). Topologically, residues 477 to 479 (SLP) are extracellular. A helical membrane pass occupies residues 480–498 (YGVAVGVAFSILVVIFQTQ). Topologically, residues 499–790 (FRNGSTLAQV…MFHTETLTAL (292 aa)) are cytoplasmic. Residues 519–737 (TYNRAQEIAG…PSIHDAVLFA (219 aa)) enclose the STAS domain.

The protein belongs to the SLC26A/SulP transporter (TC 2.A.53) family. As to quaternary structure, homodimer. In terms of tissue distribution, expressed in stomach and trachea. Abundantly expressed in the apical domain of the surface epithelial cells and the deep cells in the gastric gland. Also expressed in heart, brain, lung and liver.

It localises to the cell membrane. Its subcellular location is the endomembrane system. It carries out the reaction chloride(in) = chloride(out). It catalyses the reaction hydrogencarbonate(in) + chloride(out) = hydrogencarbonate(out) + chloride(in). Its activity is regulated as follows. Inhibited by ammonium and thiosulfate. Its function is as follows. Ion transporter that can act both as an ion channel and anion exchanger. Mainly acts as a chloride channel, which mediate uncoupled chloride anion transport in an alternate-access mechanism where a saturable binding site is alternately exposed to either one or the other side of the membrane. Also acts as a DIDS- and thiosulfate- sensitive anion exchanger the exchange of chloride for bicarbonate ions across the cell membrane. This chain is Solute carrier family 26 member 9, found in Mus musculus (Mouse).